The following is a 1064-amino-acid chain: Lysine-specific demethylase 4A (1064 aa).

Position 2 is an N-acetylalanine (Ala-2). The JmjN domain maps to 14–56 (IMTFYPTMEEFRNFSRYIAYIESQGAHRAGLAKVVPPKEWKPR). Residue Tyr-132 participates in 2-oxoglutarate binding. One can recognise a JmjC domain in the interval 142 to 308 (EKHVDEWNIG…YGKQAVLCSC (167 aa)). Fe cation is bound by residues His-188 and Glu-190. The 2-oxoglutarate site is built by Asn-198 and Lys-206. Zn(2+) contacts are provided by Cys-234 and His-240. Lys-241 provides a ligand contact to 2-oxoglutarate. A Fe cation-binding site is contributed by His-276. The Zn(2+) site is built by Cys-306 and Cys-308. Disordered regions lie at residues 358–384 (ELPPRAGNEEECPEDDMEGVEDGEEGD), 501–537 (FSGSKKKSSSSLGSGSSRDSVSSDSETSEPLSCRAQG), and 616–642 (SDDETSEQLTPEEEAEETEAWAKPLSQ). Acidic residues predominate over residues 366 to 382 (EEECPEDDMEGVEDGEE). Over residues 509–532 (SSSLGSGSSRDSVSSDSETSEPLS) the composition is skewed to low complexity. Ser-523 is modified (phosphoserine). The segment at 597–638 (RQPLSKLPRHHPLVLQECVSDDETSEQLTPEEEAEETEAWAK) is interaction with NCOR1. A compositionally biased stretch (acidic residues) spans 616–634 (SDDETSEQLTPEEEAEETE). Residues 709–767 (MCFTSTGCGTDINLSTPYLEEDGTSILVSCKKCSVRVHASCYGVPPAKASEDWMCSRCS) form a PHD-type 1 zinc finger. A C2HC pre-PHD-type zinc finger spans residues 772-805 (EEDCCLCSLRGGALQRANDDRWVHVSCAVAILEA). The segment at 828–885 (LKCIFCKKRRKRTAGCCVQCSHGRCPTAFHVSCAQAAGVMMQPDDWPFVVFITCFRHK) adopts a PHD-type 2 zinc-finger fold. 2 Tudor domains span residues 897–954 (QSIT…CLQF) and 955–1011 (GPPA…EELP).

This sequence belongs to the JHDM3 histone demethylase family. Interacts with histone deacetylase proteins HDAC1, HDAC2 and HDAC3. Interacts with RB and NCOR1. Interacts with VRK1. The cofactor is Fe(2+). In terms of processing, ubiquitinated by RNF8 and RNF168, leading to its degradation. Degradation promotes accessibility of H4K20me2 mark for DNA repair protein TP53BP1, which is then recruited. Also ubiquitinated by the SCF(FBXO22) complex; leading to proteasomal degradation.

It is found in the nucleus. It catalyses the reaction N(6),N(6),N(6)-trimethyl-L-lysyl(9)-[histone H3] + 2 2-oxoglutarate + 2 O2 = N(6)-methyl-L-lysyl(9)-[histone H3] + 2 formaldehyde + 2 succinate + 2 CO2. The enzyme catalyses N(6),N(6),N(6)-trimethyl-L-lysyl(36)-[histone H3] + 2 2-oxoglutarate + 2 O2 = N(6)-methyl-L-lysyl(36)-[histone H3] + 2 formaldehyde + 2 succinate + 2 CO2. Its function is as follows. Histone demethylase that specifically demethylates 'Lys-9' and 'Lys-36' residues of histone H3, thereby playing a central role in histone code. Does not demethylate histone H3 'Lys-4', H3 'Lys-27' nor H4 'Lys-20'. Demethylates trimethylated H3 'Lys-9' and H3 'Lys-36' residue, while it has no activity on mono- and dimethylated residues. Demethylation of Lys residue generates formaldehyde and succinate. Participates in transcriptional repression of ASCL2 and E2F-responsive promoters via the recruitment of histone deacetylases and NCOR1, respectively. The polypeptide is Lysine-specific demethylase 4A (KDM4A) (Pongo abelii (Sumatran orangutan)).